Consider the following 201-residue polypeptide: Single-stranded DNA-binding protein DdrA (201 aa).

It belongs to the RAD52 family. The truncated form (1-160) of DdrA forms heptameric rings that can assemble into a 3-ring structure.

In terms of biological role, ssDNA-binding protein that contributes to the ionizing radiation resistance of D.deserti. Plays a role in DNA repair and genome reconstitution, in a RecA-independent process, since DdrA is essential for recovery from severe genomic fragmentation as a result of exposure to severe levels of ionizing radiation in an environment lacking nutrients. In vitro, binds to the 3'-ends of single-stranded DNA, and probably protects them from nuclease degradation. Thus, DdrA is part of a DNA end-protection system that helps to preserve genome integrity following irradiation or desiccation. This is Single-stranded DNA-binding protein DdrA (ddrA) from Deinococcus deserti (strain DSM 17065 / CIP 109153 / LMG 22923 / VCD115).